A 1072-amino-acid chain; its full sequence is Guanylyl cyclase C (1072 aa).

Residues 1–19 form the signal peptide; it reads MTSLLGLAVRLLLFQPALM. Topologically, residues 20 to 433 are extracellular; it reads VFWASQVRQN…VPGLGPQILM (414 aa). Residues Asn-32, Asn-75, Asn-79, Asn-179, Asn-188, Asn-195, Asn-284, Asn-307, Asn-345, and Asn-402 are each glycosylated (N-linked (GlcNAc...) asparagine). A helical transmembrane segment spans residues 434–454; the sequence is IAVFTLTGILVVLLLIALLVL. Topologically, residues 455-1072 are cytoplasmic; that stretch reads RKYRRDHALR…NNSDHDSTYF (618 aa). The region spanning 489 to 748 is the Protein kinase domain; the sequence is LKIDDDRRRD…KIESTLAKIF (260 aa). Positions 823–953 constitute a Guanylate cyclase domain; the sequence is TIYFSDIVGF…DTVNTASRME (131 aa).

Belongs to the adenylyl cyclase class-4/guanylyl cyclase family. Homotrimer. Interacts via its C-terminal region with NHERF4. Interacts with the lectin chaperone VIP36. In terms of processing, glycosylation at Asn-75 and/or Asn-79 is required for interaction with VIP36 while glycosylation at Asn-345 and Asn-402 modulates ligand-mediated GC-C activation.

It localises to the cell membrane. Its subcellular location is the endoplasmic reticulum membrane. The enzyme catalyses GTP = 3',5'-cyclic GMP + diphosphate. Functionally, guanylyl cyclase that catalyzes synthesis of cyclic GMP (cGMP) from GTP. The protein is Guanylyl cyclase C (Gucy2c) of Mus musculus (Mouse).